Here is a 251-residue protein sequence, read N- to C-terminus: Aliphatic sulfonates import ATP-binding protein SsuB (251 aa).

The region spanning 3–231 is the ABC transporter domain; it reads VSINEVSKYF…PRNKTSQSFQ (229 aa). Position 39 to 46 (39 to 46) interacts with ATP; it reads GPSGCGKS.

The protein belongs to the ABC transporter superfamily. Aliphatic sulfonates importer (TC 3.A.1.17.2) family. As to quaternary structure, the complex is composed of two ATP-binding proteins (SsuB), two transmembrane proteins (SsuC) and a solute-binding protein (SsuA).

The protein localises to the cell membrane. It carries out the reaction ATP + H2O + aliphatic sulfonate-[sulfonate-binding protein]Side 1 = ADP + phosphate + aliphatic sulfonateSide 2 + [sulfonate-binding protein]Side 1.. Part of the ABC transporter complex SsuABC involved in aliphatic sulfonates import. Responsible for energy coupling to the transport system. In Bacillus thuringiensis subsp. konkukian (strain 97-27), this protein is Aliphatic sulfonates import ATP-binding protein SsuB.